A 131-amino-acid chain; its full sequence is Aspartate 1-decarboxylase (131 aa).

S25 (schiff-base intermediate with substrate; via pyruvic acid) is an active-site residue. The residue at position 25 (S25) is a Pyruvic acid (Ser). T57 is a binding site for substrate. Catalysis depends on Y58, which acts as the Proton donor. 73 to 75 contacts substrate; sequence GAA.

The protein belongs to the PanD family. Heterooctamer of four alpha and four beta subunits. Pyruvate serves as cofactor. Is synthesized initially as an inactive proenzyme, which is activated by self-cleavage at a specific serine bond to produce a beta-subunit with a hydroxyl group at its C-terminus and an alpha-subunit with a pyruvoyl group at its N-terminus.

It localises to the cytoplasm. The enzyme catalyses L-aspartate + H(+) = beta-alanine + CO2. It functions in the pathway cofactor biosynthesis; (R)-pantothenate biosynthesis; beta-alanine from L-aspartate: step 1/1. Its function is as follows. Catalyzes the pyruvoyl-dependent decarboxylation of aspartate to produce beta-alanine. The polypeptide is Aspartate 1-decarboxylase (Chlorobium phaeobacteroides (strain DSM 266 / SMG 266 / 2430)).